We begin with the raw amino-acid sequence, 623 residues long: Low affinity potassium transport system protein Kup (623 aa).

A run of 12 helical transmembrane segments spans residues 9–29 (LPAITLAAIGVVYGDIGTSPL), 49–69 (VFGFLSLIFWLLVFVVSFKYL), 101–121 (VLVILGLIGGSFFYGEVVITP), 137–157 (PSLDPYIVPLSIVVLTLLFMI), 163–183 (GMVGKLFAPIMLAWFLVLAVL), 212–232 (AVSFAALGAVVLSITGVEALY), 247–267 (WFSVVLPSLVLNYFGQGALLL), 276–296 (PFFLLAPDWALIPMLILATLA), 337–357 (IYIPVVNWLLYFAVVIVIVSF), 363–383 (LAAAYGIAVTGTMVLTSILFA), 395–415 (ILVGLMVVAFLCVDVPLFSAN), and 419–439 (LFSGGWLPLSLGLVMFIIMTT).

The protein belongs to the HAK/KUP transporter (TC 2.A.72) family.

It is found in the cell inner membrane. It carries out the reaction K(+)(in) + H(+)(in) = K(+)(out) + H(+)(out). Functionally, responsible for the low-affinity transport of potassium into the cell. Likely operates as a K(+):H(+) symporter. The protein is Low affinity potassium transport system protein Kup of Cronobacter sakazakii (strain ATCC BAA-894) (Enterobacter sakazakii).